The sequence spans 164 residues: MESIPISVEGFRRLERELERLKKERPGVILAIKEAREEGDLRENAGYEAARERQGMLEARINYIESRMSRFNVIDLATLGGEQVIFGATVEIEDVDTGDVKKYTLLGPDEAEPSKGSISLLSPVGLALLGKFVGDEIVVDAPRGKINYEIVSIAFHGPIAAADD.

Residues 12–38 (RRLERELERLKKERPGVILAIKEAREE) are a coiled coil.

The protein belongs to the GreA/GreB family.

In terms of biological role, necessary for efficient RNA polymerase transcription elongation past template-encoded arresting sites. The arresting sites in DNA have the property of trapping a certain fraction of elongating RNA polymerases that pass through, resulting in locked ternary complexes. Cleavage of the nascent transcript by cleavage factors such as GreA or GreB allows the resumption of elongation from the new 3'terminus. GreA releases sequences of 2 to 3 nucleotides. In Solidesulfovibrio magneticus (strain ATCC 700980 / DSM 13731 / RS-1) (Desulfovibrio magneticus), this protein is Transcription elongation factor GreA.